The primary structure comprises 224 residues: MSLQEFHNVEDAVKLLKCYNLNDKNLDSKIIVGFVFNKTKSISKKRVKIEQGYLTELGKESFSFPNFFGKSPEIALFTTKKLDNFSTIDYVGSDDLIKKIEDNSIKPNYLIVLKDEVGSLAKYSRVLGPKGLMPTPKQGTVVENNNILLSTIETLKKGSFRIKVNKYNMIQMSVGNLTMNTDQILENIKSLLLYIQNRLPVSYRKTSLKKIYVTMTHGPSFIIN.

It belongs to the universal ribosomal protein uL1 family.

Its subcellular location is the mitochondrion. In Reclinomonas americana, this protein is Large ribosomal subunit protein uL1m (RPL1).